Here is a 258-residue protein sequence, read N- to C-terminus: Cell division protein FtsQ (258 aa).

Over 1-29 the chain is Cytoplasmic; it reads MAKNAPAPRGARRKPVKKVGVPLRERVAT. The chain crosses the membrane as a helical span at residues 30–50; it reads AVPWMLVGSVAMVSLLAVIYL. The Periplasmic segment spans residues 51-258; the sequence is PAALDGYPIR…MAVTWREQQS (208 aa). One can recognise a POTRA domain in the interval 57 to 127; sequence YPIRKVGVDG…DTVVLTVEER (71 aa).

Belongs to the FtsQ/DivIB family. FtsQ subfamily. In terms of assembly, part of a complex composed of FtsB, FtsL and FtsQ.

It is found in the cell inner membrane. Its function is as follows. Essential cell division protein. May link together the upstream cell division proteins, which are predominantly cytoplasmic, with the downstream cell division proteins, which are predominantly periplasmic. May control correct divisome assembly. This Alcanivorax borkumensis (strain ATCC 700651 / DSM 11573 / NCIMB 13689 / SK2) protein is Cell division protein FtsQ.